The chain runs to 307 residues: 17-beta-hydroxysteroid dehydrogenase type 3 (307 aa).

The chain crosses the membrane as a helical span at residues 6-26 (IIFVLTGTCAILVFGGKIASL). 47 to 76 (GKWAVITGGSDGIGRAYAEELSKQGMSVII) serves as a coordination point for NADP(+). Position 187 (serine 187) interacts with substrate. The active-site Proton acceptor is tyrosine 200.

This sequence belongs to the short-chain dehydrogenases/reductases (SDR) family. Expression shows strong sexual dimorphism. In female, highly expressed in ovaries, and at lower levels in skin muscle, eyes and liver. In males, strongly expressed in liver and at lower levels in testis, spleen, kidney, intestine and muscle.

Its subcellular location is the endoplasmic reticulum. It is found in the membrane. The enzyme catalyses a 17beta-hydroxy steroid + NADP(+) = a 17-oxo steroid + NADPH + H(+). The catalysed reaction is testosterone + NADP(+) = androst-4-ene-3,17-dione + NADPH + H(+). It catalyses the reaction 3beta-hydroxyandrost-5-en-17-one + NADPH + H(+) = androst-5-en-3beta,17beta-diol + NADP(+). It carries out the reaction 3beta-hydroxy-5alpha-androstan-17-one + NADPH + H(+) = 5alpha-androstane-3beta,17beta-diol + NADP(+). The enzyme catalyses androst-4-ene-3,11,17-trione + NADPH + H(+) = 17beta-hydroxyandrost-4-ene-3,11-dione + NADP(+). The catalysed reaction is 11beta-hydroxyandrost-4-ene-3,17-dione + NADPH + H(+) = 11beta,17beta-dihydroxyandrost-4-ene-3-one + NADP(+). The protein operates within hormone biosynthesis; testosterone biosynthesis. It functions in the pathway steroid metabolism. Catalyzes the conversion of 17-oxosteroids to 17beta-hydroxysteroids in the presence of NADPH. Favors the reduction of androstenedione to testosterone. Testosterone is the key androgen driving male development and function. Among further tested androgens epiandrosterone and dehydroepiandrosterone are accepted as substrates and reduced at C-17. Can also reduce 11-ketoandrostenedione as well as 11beta-hydroxyandrostenedione at C-17 to the respective testosterone forms. Cannot use androsterone and androstanedione as substrates. The polypeptide is 17-beta-hydroxysteroid dehydrogenase type 3 (hsd17b3) (Danio rerio (Zebrafish)).